The chain runs to 421 residues: Anthranilate synthase component 1 (421 aa).

Residues Ser-31 and 207 to 209 each bind L-tryptophan; that span reads PYM. 242-243 is a chorismate binding site; sequence GT. Glu-269 provides a ligand contact to Mg(2+). Chorismate contacts are provided by residues Tyr-357, Arg-377, 391–393, and Gly-393; that span reads GAG. Glu-406 serves as a coordination point for Mg(2+).

It belongs to the anthranilate synthase component I family. In terms of assembly, heterotetramer consisting of two non-identical subunits: a beta subunit (TrpG) and a large alpha subunit (TrpE). Requires Mg(2+) as cofactor.

It carries out the reaction chorismate + L-glutamine = anthranilate + pyruvate + L-glutamate + H(+). It functions in the pathway amino-acid biosynthesis; L-tryptophan biosynthesis; L-tryptophan from chorismate: step 1/5. Its activity is regulated as follows. Cooperatively feedback inhibited by tryptophan. Part of a heterotetrameric complex that catalyzes the two-step biosynthesis of anthranilate, an intermediate in the biosynthesis of L-tryptophan. In the first step, the glutamine-binding beta subunit (TrpG) of anthranilate synthase (AS) provides the glutamine amidotransferase activity which generates ammonia as a substrate that, along with chorismate, is used in the second step, catalyzed by the large alpha subunit of AS (TrpE) to produce anthranilate. In the absence of TrpG, TrpE can synthesize anthranilate directly from chorismate and high concentrations of ammonia. This chain is Anthranilate synthase component 1 (trpE), found in Saccharolobus solfataricus (strain ATCC 35092 / DSM 1617 / JCM 11322 / P2) (Sulfolobus solfataricus).